We begin with the raw amino-acid sequence, 431 residues long: Serine hydroxymethyltransferase (431 aa).

(6S)-5,6,7,8-tetrahydrofolate contacts are provided by residues L128 and 132–134 (GHL). N6-(pyridoxal phosphate)lysine is present on K237.

This sequence belongs to the SHMT family. In terms of assembly, homodimer. The cofactor is pyridoxal 5'-phosphate.

It localises to the cytoplasm. It carries out the reaction (6R)-5,10-methylene-5,6,7,8-tetrahydrofolate + glycine + H2O = (6S)-5,6,7,8-tetrahydrofolate + L-serine. The protein operates within one-carbon metabolism; tetrahydrofolate interconversion. Its pathway is amino-acid biosynthesis; glycine biosynthesis; glycine from L-serine: step 1/1. Its function is as follows. Catalyzes the reversible interconversion of serine and glycine with tetrahydrofolate (THF) serving as the one-carbon carrier. This reaction serves as the major source of one-carbon groups required for the biosynthesis of purines, thymidylate, methionine, and other important biomolecules. Also exhibits THF-independent aldolase activity toward beta-hydroxyamino acids, producing glycine and aldehydes, via a retro-aldol mechanism. This is Serine hydroxymethyltransferase from Ruegeria sp. (strain TM1040) (Silicibacter sp.).